Consider the following 265-residue polypeptide: MIKIKNLVFRYRNSSNNALDDLTLWIPKGKYVAILGHNGSGKSTLSKILVGLFKPTSGEVEIDGVVLNQESKNLIQSKVGIILQNPDNQFIGATVEDDIAFGLENKMLKSEKIKEIIDFYSEKVGMKEFLKREPQNLSGGQKQRVAIASVLALDPEVIIFDEVTSMLDPLGKHSILELIKDIQEKNSKTLISITHDMDEAIQADYCLVFSAGKLVASGKPADILNNKEIVELAKIDSPFIYKISQKLEGIEPTYDEEHLLEQICK.

Positions 2 to 236 (IKIKNLVFRY…KEIVELAKID (235 aa)) constitute an ABC transporter domain. 36 to 43 (GHNGSGKS) contributes to the ATP binding site.

This sequence belongs to the ABC transporter superfamily. Energy-coupling factor EcfA family. In terms of assembly, forms a stable energy-coupling factor (ECF) transporter complex composed of 2 membrane-embedded substrate-binding proteins (S component), 2 ATP-binding proteins (A component) and 2 transmembrane proteins (T component).

It is found in the cell membrane. ATP-binding (A) component of a common energy-coupling factor (ECF) ABC-transporter complex. Unlike classic ABC transporters this ECF transporter provides the energy necessary to transport a number of different substrates. The chain is Energy-coupling factor transporter ATP-binding protein EcfA1 from Mycoplasmopsis pulmonis (strain UAB CTIP) (Mycoplasma pulmonis).